The following is a 552-amino-acid chain: Polypeptide N-acetylgalactosaminyltransferase 14 (552 aa).

Residues 1 to 6 (MRRLTR) lie on the Cytoplasmic side of the membrane. A helical; Signal-anchor for type II membrane protein membrane pass occupies residues 7 to 26 (RLVLPVFGVLWITVLLFFWV). The Lumenal segment spans residues 27-552 (TKRKLEVPTG…MSQHWDMVSS (526 aa)). Disulfide bonds link cysteine 101-cysteine 328, cysteine 319-cysteine 397, cysteine 430-cysteine 449, cysteine 476-cysteine 493, and cysteine 517-cysteine 538. The tract at residues 110 to 215 (LPPTSIIITF…RDWLQPLLHR (106 aa)) is catalytic subdomain A. Aspartate 151 and arginine 176 together coordinate substrate. A Mn(2+)-binding site is contributed by aspartate 199. A substrate-binding site is contributed by serine 200. Position 201 (histidine 201) interacts with Mn(2+). The tract at residues 274–336 (PIRTPIIAGG…PCSRVGHVFR (63 aa)) is catalytic subdomain B. Residue tryptophan 305 coordinates substrate. Histidine 333 is a binding site for Mn(2+). Arginine 336, histidine 339, and tyrosine 341 together coordinate substrate. Residues 415 to 550 (KESSIQKGNI…SLMSQHWDMV (136 aa)) form the Ricin B-type lectin domain.

It belongs to the glycosyltransferase 2 family. GalNAc-T subfamily. It depends on Mn(2+) as a cofactor. In terms of tissue distribution, detected in renal tubules (at protein level). Highly expressed in fetal and adult kidney. Widely expressed at low level. Weakly expressed in whole brain, cerebellum, thymus, lung, mammary gland, liver, stomach, small intestine, colon, pancreas, spleen, bladder, uterus, placenta, testis, ovary, skeletal muscle, leukocyte, B-cell, bone marrow, fetal brain, fetal thymus, fetal lung, fetal liver, fetal small intestine, fetal spleen, fetal skeletal and fetus. Detected in renal tubules (at protein level).

The protein resides in the golgi apparatus membrane. It carries out the reaction L-seryl-[protein] + UDP-N-acetyl-alpha-D-galactosamine = a 3-O-[N-acetyl-alpha-D-galactosaminyl]-L-seryl-[protein] + UDP + H(+). The catalysed reaction is L-threonyl-[protein] + UDP-N-acetyl-alpha-D-galactosamine = a 3-O-[N-acetyl-alpha-D-galactosaminyl]-L-threonyl-[protein] + UDP + H(+). It functions in the pathway protein modification; protein glycosylation. Functionally, catalyzes the initial reaction in O-linked oligosaccharide biosynthesis, the transfer of an N-acetyl-D-galactosamine residue to a serine or threonine residue on the protein receptor. Displays activity toward mucin-derived peptide substrates such as Muc2, Muc5AC, Muc7, and Muc13 (-58). May be involved in O-glycosylation in kidney. The sequence is that of Polypeptide N-acetylgalactosaminyltransferase 14 (GALNT14) from Homo sapiens (Human).